The following is a 220-amino-acid chain: Ribosomal RNA large subunit methyltransferase E (220 aa).

A compositionally biased stretch (basic and acidic residues) spans Met-1–Lys-10. A disordered region spans residues Met-1–Arg-24. S-adenosyl-L-methionine-binding residues include Gly-75, Trp-77, Asp-94, Asp-110, and Asp-134. The active-site Proton acceptor is Lys-174.

This sequence belongs to the class I-like SAM-binding methyltransferase superfamily. RNA methyltransferase RlmE family.

It is found in the cytoplasm. It catalyses the reaction uridine(2552) in 23S rRNA + S-adenosyl-L-methionine = 2'-O-methyluridine(2552) in 23S rRNA + S-adenosyl-L-homocysteine + H(+). In terms of biological role, specifically methylates the uridine in position 2552 of 23S rRNA at the 2'-O position of the ribose in the fully assembled 50S ribosomal subunit. The chain is Ribosomal RNA large subunit methyltransferase E from Erythrobacter litoralis (strain HTCC2594).